Reading from the N-terminus, the 331-residue chain is UPF0324 membrane protein SERP0111 (331 aa).

10 helical membrane-spanning segments follow: residues 7–26 (ASFM…SYIL), 31–48 (ILHT…AMIY), 69–88 (LLKF…DILG), 93–115 (LLLI…NQII), 122–144 (SILL…APIL), 154–176 (SVGI…EAIF), 183–205 (YGAW…GIGG), 249–271 (IPYF…IPSL), 275–297 (IINV…NIVL), and 308–330 (FIVI…SIMF).

This sequence belongs to the UPF0324 family.

It localises to the cell membrane. The chain is UPF0324 membrane protein SERP0111 from Staphylococcus epidermidis (strain ATCC 35984 / DSM 28319 / BCRC 17069 / CCUG 31568 / BM 3577 / RP62A).